Consider the following 30-residue polypeptide: Fibrinogen (30 aa).

In terms of assembly, homodimer. In terms of tissue distribution, secreted into the hemolymph.

The protein resides in the secreted. It localises to the extracellular space. Functionally, clotting protein. In Panulirus interruptus (California spiny lobster), this protein is Fibrinogen.